The following is a 309-amino-acid chain: Spermatid maturation protein 1 (309 aa).

The helical transmembrane segment at Val-29 to Leu-49 threads the bilayer. Residues Pro-209 to Glu-231 form a disordered region. Residues Arg-259 to Tyr-285 are a coiled coil.

It localises to the membrane. The protein resides in the cytoplasm. Its function is as follows. Required for proper cytoplasm removal during spermatogenesis. This Homo sapiens (Human) protein is Spermatid maturation protein 1 (SPEM1).